The sequence spans 344 residues: MGCFSLLCLHNLKDWEGLEKIESDTEYFRVPGLFDKIELTKNQLGNAARPRNEEWRVMSEKMKKAEEEAYGMVVNTFEDLEKEYIEGLMNAKNKKIWTIGPVSLCNKEKQDKAERGNEAAIDEHKCLNWLDSWEQNSVLFVCLGSLSRLSTSQMVELGLGLESSRRPFIWVVRHMSDEFKNWLVEEDFEERVKGQGLLIRGWAPQVLLLSHPSIGAFLTHCGWNSSLEGITAGVAMITWPMFAEQFCNERLIVDVLKTGVRSGIERQVMFGEEEKLGTQVSKDDIKKVIEQVMDEEMEGEMRRKRAKELGEKAKRAMEEEGSSHFNLTQLIQDVTEQAKILKPM.

Residues Ser145, 202 to 203 (WA), 220 to 228 (HCGWNSSLE), and 242 to 245 (FAEQ) each bind UDP-alpha-D-glucose.

The protein belongs to the UDP-glycosyltransferase family. In terms of tissue distribution, expressed in flowers and fruits.

Its subcellular location is the cytoplasm. It is found in the nucleus. Probable glucosyltransferase that cannot glycosylate abscisic acid (ABA) and auxin (IAA). The protein is UDP-glycosyltransferase 73C4 of Solanum lycopersicum (Tomato).